The following is a 140-amino-acid chain: Protein NrdI (140 aa).

The protein belongs to the NrdI family.

Its function is as follows. Probably involved in ribonucleotide reductase function. The sequence is that of Protein NrdI from Ruegeria sp. (strain TM1040) (Silicibacter sp.).